The sequence spans 380 residues: MNRYRYESIFFRYISSTRMILIICLLLGTGDMSAMGLKKDNSPIIPTLHPKGNENLRATLNEYKIPSPLFDTLDNSYETKHVIYTDNCSFAVLNPFGDPKYTLLSLLLMGRRKYDALVAWFVLGRACGRPIYLREYANCSTNEPFGTCKLKSLGWWDRRYAMTSYIDRDELKLIIAAPSRELSGLYTRLIIINGEPISSDILLTVKGTCSFSRRGIKDNKLCKPFSFFVNGTTRLLDMVRTGTPRAHEENVKQWLERNGGKHLPIVVETSMQQVSNLPRSFRDSYLKSPDDDKYNDVKMTSATTNNITTSVDGYTGLTNRPEDFEKAPYITKRPIISVEEASSQSPKISTEKKSRTQIIISLVVLCVMFCFIVIGSGIWI.

This is an uncharacterized protein from Gallid herpesvirus 2 (strain GA) (GaHV-2).